The primary structure comprises 532 residues: uncharacterized protein (532 aa).

The next 5 helical transmembrane spans lie at 11-31, 51-71, 126-146, 147-167, and 231-253; these read YLSH…ALII, IEPF…KIFF, LIDI…YTLW, ILYN…IIVF, and YVES…VLLI. Positions 315 to 531 constitute an ABC transporter domain; that stretch reads ICINKLVYEY…MIIPMNNGII (217 aa). Residue 349–356 participates in ATP binding; that stretch reads GKSGSGKS.

The protein resides in the membrane. This is an uncharacterized protein from Acanthamoeba polyphaga mimivirus (APMV).